Consider the following 97-residue polypeptide: Co-chaperonin GroES (97 aa).

The protein belongs to the GroES chaperonin family. In terms of assembly, heptamer of 7 subunits arranged in a ring. Interacts with the chaperonin GroEL.

It localises to the cytoplasm. Functionally, together with the chaperonin GroEL, plays an essential role in assisting protein folding. The GroEL-GroES system forms a nano-cage that allows encapsulation of the non-native substrate proteins and provides a physical environment optimized to promote and accelerate protein folding. GroES binds to the apical surface of the GroEL ring, thereby capping the opening of the GroEL channel. The polypeptide is Co-chaperonin GroES (Buchnera aphidicola subsp. Pterocomma populeum).